The following is an 82-amino-acid chain: Consomatin Mao1 (82 aa).

Positions 1–22 are cleaved as a signal peptide; sequence MQTASWVMVMMMVWITAPLSEG. Positions 23 to 57 are excised as a propeptide; the sequence is GKLNDVIRGLVPDDVTPQLILRSLFFHRPSDSVVR. C65 and C70 are oxidised to a cystine. W67 carries the D-tryptophan modification. Residues P71, P72, and P74 each carry the 4-hydroxyproline modification. Positions 75-82 are excised as a propeptide; sequence WRRPNGKG.

Belongs to the conotoxin C superfamily. Consomatin family. As to expression, expressed by the venom duct.

It localises to the secreted. Functionally, moderately activates human somatostatin receptors (SSTR) with a preferential activation of SSTR1 and SSTR4. In vivo, does not cause behavioral changes in mice within a few minutes of intracranial injection, but causes a progressive loss of movement thereafter. Four to five hours after injection, mice recover, even with the highest dose tested. Shows antinociception and antihyperalgesia activities in two mouse models of acute pain, most probably by acting outside the central nervous system. The polypeptide is Consomatin Mao1 (Conus maioensis (Sea snail)).